The primary structure comprises 202 residues: MSVVDLSLWEPRTELGRLVKEGKIRTIDEIFANNYIIKEPEIVDILLPGLKQEILNINVVQRQTHAGERSQFQVVVAVGNEDGYVGVGIGKAKQVRQAIEKAVREAKLNLTPVRRGCGSWKCSCDEPHSVPFVVRGKSGSVEVTLIPAPKGVGLVAGDVAKVVLRLAGIKDVWTQTRGDTRTTLNFAMAVYNALRNTYYFKI.

One can recognise an S5 DRBM domain in the interval 50-113 (LKQEILNINV…REAKLNLTPV (64 aa)).

This sequence belongs to the universal ribosomal protein uS5 family. As to quaternary structure, part of the 30S ribosomal subunit. Contacts protein S4.

Its function is as follows. With S4 and S12 plays an important role in translational accuracy. The sequence is that of Small ribosomal subunit protein uS5 from Pyrobaculum islandicum (strain DSM 4184 / JCM 9189 / GEO3).